The following is a 174-amino-acid chain: Protein RESTRICTED TEV MOVEMENT 1 (174 aa).

One can recognise a Jacalin-type lectin domain in the interval 1–152; that stretch reads MKIGPVGKHD…LQYIGVYLRP (152 aa).

Belongs to the jacalin lectin family. Self-interacts. Interacts with RTM3. Expressed at low levels exclusively in phloem-associated cells (e.g. sieve elements and adjacent cells).

The protein localises to the cytoplasm. Its function is as follows. Required for the restriction of long-distance movement of the pathogenic tobacco etch virus (TEV) without causing a hypersensitive response or inducing systemic acquired resistance. In Arabidopsis thaliana (Mouse-ear cress), this protein is Protein RESTRICTED TEV MOVEMENT 1 (RTM1).